Here is a 374-residue protein sequence, read N- to C-terminus: Translocating chain-associated membrane protein 1 (374 aa).

Residues 1 to 32 (MAIRKKSNKNPPVLSHEFVLQNHADIVSCLAM) are Cytoplasmic-facing. A helical transmembrane segment spans residues 33–53 (LFLLGLMFEITAKGAIIFVAL). At 54-81 (QYNVTRPATEEQAAESASLYYYGIKDLA) the chain is on the lumenal side. Asn-56 carries N-linked (GlcNAc...) asparagine glycosylation. Residues 82–102 (TVFFYMLVAIIVHAIIQEYVL) form a helical membrane-spanning segment. Residues 103–121 (DKINRRMHFSKTKHSKFNE) lie on the Cytoplasmic side of the membrane. The TLC domain maps to 117–326 (SKFNESGQLS…NFQLRRWREH (210 aa)). Residues 122 to 142 (SGQLSAFYLFACVWGTFILVS) form a helical membrane-spanning segment. At 143–159 (ENYISDPTILWRAYPHN) the chain is on the lumenal side. The chain crosses the membrane as a helical span at residues 160–180 (LMTFQMKFFYISQLAYWLHAF). Topologically, residues 181–192 (PELYFQKTKKED) are cytoplasmic. A helical membrane pass occupies residues 193-213 (IPRQLVYIGLYLFHIAGAYLL). Asn-214 is a topological domain (lumenal). A helical transmembrane segment spans residues 215 to 235 (LNHLGLVLLVLHYFVEFLFHI). The Cytoplasmic portion of the chain corresponds to 236–251 (SRLFYFSDEKYQKGFS). The chain crosses the membrane as a helical span at residues 252 to 272 (LWAVLFVLGRLLTLILSVLTV). The Lumenal portion of the chain corresponds to 273-297 (GFGLARAENQKLDFSTGNFNVLAVR). The chain crosses the membrane as a helical span at residues 298–318 (IAVLASICITQAFMMWKFINF). Residues 319-374 (QLRRWREHSAFQAPPVKRKPAVTKGRSSRKGTENGVNGTVTSNGADSPRSRKEKSS) are Cytoplasmic-facing. The disordered stretch occupies residues 333 to 374 (PVKRKPAVTKGRSSRKGTENGVNGTVTSNGADSPRSRKEKSS). Positions 334 to 347 (VKRKPAVTKGRSSR) are enriched in basic residues. Residues 352-363 (NGVNGTVTSNGA) show a composition bias toward polar residues. The residue at position 365 (Ser-365) is a Phosphoserine.

The protein belongs to the TRAM family. In terms of assembly, interacts with SEC61B. May interact with Derlin-1/DERL1. In terms of processing, N-glycosylated.

It is found in the endoplasmic reticulum membrane. Functionally, involved in the translocation of nascent protein chains into or through the endoplasmic reticulum (ER) membrane by facilitating the proper chain positioning at the SEC61 channel. Regulates the exposure of nascent secretory protein chain to the cytosol during translocation into the ER. May affect the phospholipid bilayer in the vicinity of the lateral gate of the SEC61 channel, thereby facilitating ER protein transport. Intimately associates with transmembrane (TM) domain of nascent membrane proteins during the entire integration process into the ER membrane. Associates with the second TM domain of G-protein-coupled receptor opsin/OPSD nascent chain in the ER membrane, which may facilitate its integration into the membrane. Under conditions of ER stress, participates in the disposal of misfolded ER membrane proteins during the unfolded protein response (UPR), an integrated stress response (ISR) pathway, by selectively retrotranslocating misfolded ER-membrane proteins from the ER into the cytosol where they are ubiquitinated and degraded by the proteasome. The protein is Translocating chain-associated membrane protein 1 of Rattus norvegicus (Rat).